An 81-amino-acid chain; its full sequence is CLAVATA3/ESR (CLE)-related protein 25 (81 aa).

The signal sequence occupies residues 1–30 (MGGNGIRALVGVIASLGLIVFLLVGILANS). Positions 57 to 81 (KRKVPNGPDPIHNRKAETSRRPPRV) are disordered. A hydroxyproline mark is found at P61 and P64. O-linked (Ara...) hydroxyproline glycosylation occurs at P64. Positions 67 to 81 (IHNRKAETSRRPPRV) are enriched in basic and acidic residues.

The protein belongs to the CLV3/ESR signal peptide family. In terms of processing, the O-glycosylation (arabinosylation) of the hydroxyproline Pro-64 enhances binding affinity of the CLE25p peptide for its receptor. Mostly expressed in flowers and siliques, and, to a lower extent, in roots, stems, apex, seedlings, leaves and pollen.

The protein localises to the secreted. The protein resides in the extracellular space. In terms of biological role, extracellular signal peptide that regulates cell fate. Represses root apical meristem maintenance. Regulates the transition of protophloem cells from proliferation to differentiation, thus impinging on postembryonic growth capacity of the root meristem; this signaling pathway requires CRN and CLV2. The protein is CLAVATA3/ESR (CLE)-related protein 25 of Arabidopsis thaliana (Mouse-ear cress).